A 292-amino-acid chain; its full sequence is GTP cyclohydrolase FolE2 (292 aa).

Belongs to the GTP cyclohydrolase IV family.

The enzyme catalyses GTP + H2O = 7,8-dihydroneopterin 3'-triphosphate + formate + H(+). Its pathway is cofactor biosynthesis; 7,8-dihydroneopterin triphosphate biosynthesis; 7,8-dihydroneopterin triphosphate from GTP: step 1/1. Its function is as follows. Converts GTP to 7,8-dihydroneopterin triphosphate. The chain is GTP cyclohydrolase FolE2 from Staphylococcus carnosus (strain TM300).